Reading from the N-terminus, the 297-residue chain is MNINQEQLLMFQAVMETGSFSAAARKLGKVPSAVSMSIANLEIDLNLTLFERKGREPTPTAEARVLYEKTAQLLIEMNQWKQHAHALSTGLEPNLTIVVVSELLHTNWTDYVCLLESRFPDLQINIVSAPQEDALQMLLDGSAQLALMFEREHLDNREQFVELKREALIPVISKTHPLASQEHVSYEQILGTRQIVVASRDETLKPELLFSKHYWRTDNHHSACLMILRNLGWGVLPQEMFKENPELNNKLKALDVFDFTPRFEYYVDLVWSRESELGAAARFLIDYIRNKRMQPAP.

An HTH lysR-type domain is found at 1-60 (MNINQEQLLMFQAVMETGSFSAAARKLGKVPSAVSMSIANLEIDLNLTLFERKGREPTPT). Positions 20-39 (FSAAARKLGKVPSAVSMSIA) form a DNA-binding region, H-T-H motif.

This sequence belongs to the LysR transcriptional regulatory family. In terms of assembly, homodimer and homotetramer. Binding of chlorhexidine at the inducer-binding domain causes a quaternary structural change that favors interactions between dimers to form tetramers.

Its subcellular location is the cytoplasm. In terms of biological role, regulates the expression of the AceI transporter. Binds DNA and chlorhexidine. Binds to regulatory sites within the intergenic region between the aceI and aceR genes, and affects the interaction between RNA polymerase (RNAP) and promoter DNA both in the presence and in the absence of chlorhexidine. In the absence of chlorhexidine, prevents transcription of the aceI gene by disrupting interactions between the promoter DNA and RNAP. In the presence of chlorhexidine, activates expression of aceI. When AceR interacts with chlorhexidine, it undergoes a conformational change and the tetrameric form either releases the DNA or shifts the position of the DNA-binding region to allow RNAP to bind onto the promoter DNA to proceed with aceI transcription. The sequence is that of HTH-type transcriptional regulator AceR from Acinetobacter baumannii (strain ATCC 17978 / DSM 105126 / CIP 53.77 / LMG 1025 / NCDC KC755 / 5377).